The primary structure comprises 204 residues: Small ribosomal subunit protein uS7 (204 aa).

Met1 carries the post-translational modification N-acetylmethionine. Residue Thr2 is modified to N-acetylthreonine; in 40S ribosomal protein S5, N-terminally processed. Thr14 carries the phosphothreonine modification. Lys47 bears the N6-acetyllysine; alternate mark. Lys47 is covalently cross-linked (Glycyl lysine isopeptide (Lys-Gly) (interchain with G-Cter in SUMO2); alternate). Position 142 is a phosphoserine (Ser142).

The protein belongs to the universal ribosomal protein uS7 family. As to quaternary structure, component of the small ribosomal subunit. Part of the small subunit (SSU) processome, composed of more than 70 proteins and the RNA chaperone small nucleolar RNA (snoRNA) U3.

The protein resides in the cytoplasm. The protein localises to the nucleus. It is found in the nucleolus. Component of the small ribosomal subunit. The ribosome is a large ribonucleoprotein complex responsible for the synthesis of proteins in the cell. Part of the small subunit (SSU) processome, first precursor of the small eukaryotic ribosomal subunit. During the assembly of the SSU processome in the nucleolus, many ribosome biogenesis factors, an RNA chaperone and ribosomal proteins associate with the nascent pre-rRNA and work in concert to generate RNA folding, modifications, rearrangements and cleavage as well as targeted degradation of pre-ribosomal RNA by the RNA exosome. The protein is Small ribosomal subunit protein uS7 (Rps5) of Mus musculus (Mouse).